The sequence spans 362 residues: Uroporphyrinogen decarboxylase (362 aa).

Residues 39–43 (RQAGR), aspartate 88, tyrosine 165, threonine 220, and histidine 334 each bind substrate.

It belongs to the uroporphyrinogen decarboxylase family. In terms of assembly, homodimer.

It is found in the cytoplasm. The enzyme catalyses uroporphyrinogen III + 4 H(+) = coproporphyrinogen III + 4 CO2. The protein operates within porphyrin-containing compound metabolism; protoporphyrin-IX biosynthesis; coproporphyrinogen-III from 5-aminolevulinate: step 4/4. Its function is as follows. Catalyzes the decarboxylation of four acetate groups of uroporphyrinogen-III to yield coproporphyrinogen-III. The protein is Uroporphyrinogen decarboxylase of Synechococcus sp. (strain JA-3-3Ab) (Cyanobacteria bacterium Yellowstone A-Prime).